We begin with the raw amino-acid sequence, 91 residues long: Insertion element IS1 2 protein InsA (91 aa).

The protein belongs to the IS1 elements InsA family.

In terms of biological role, absolutely required for transposition of IS1. In Escherichia coli (strain K12), this protein is Insertion element IS1 2 protein InsA (insA2).